The following is a 376-amino-acid chain: Alcohol dehydrogenase 6 (376 aa).

7 residues coordinate Zn(2+): Cys47, His69, Cys99, Cys102, Cys105, Cys113, and Cys175. Residues 200–205 (GLGGVG), Asp224, Arg229, 293–295 (VGA), and Arg371 each bind NAD(+).

It belongs to the zinc-containing alcohol dehydrogenase family. Class-V subfamily. As to quaternary structure, dimer. Zn(2+) is required as a cofactor.

It localises to the cytoplasm. It catalyses the reaction a primary alcohol + NAD(+) = an aldehyde + NADH + H(+). The catalysed reaction is a secondary alcohol + NAD(+) = a ketone + NADH + H(+). Its function is as follows. Alcohol dehydrogenase. Catalyzes the NAD-dependent oxidation of primary alcohols to the corresponding aldehydes. Oxidizes secondary alcohols to the corresponding ketones. This Rattus norvegicus (Rat) protein is Alcohol dehydrogenase 6 (Adh6).